A 367-amino-acid chain; its full sequence is Cobalt-precorrin-5B C(1)-methyltransferase (367 aa).

Belongs to the CbiD family.

The catalysed reaction is Co-precorrin-5B + S-adenosyl-L-methionine = Co-precorrin-6A + S-adenosyl-L-homocysteine. Its pathway is cofactor biosynthesis; adenosylcobalamin biosynthesis; cob(II)yrinate a,c-diamide from sirohydrochlorin (anaerobic route): step 6/10. In terms of biological role, catalyzes the methylation of C-1 in cobalt-precorrin-5B to form cobalt-precorrin-6A. This is Cobalt-precorrin-5B C(1)-methyltransferase from Priestia megaterium (Bacillus megaterium).